Consider the following 386-residue polypeptide: 2,3-diketo-5-methylthiopentyl-1-phosphate enolase (386 aa).

Lysine 85 (proton acceptor) is an active-site residue. Substrate is bound by residues lysine 131, 157 to 160 (KDDE), histidine 248, glycine 316, and 338 to 339 (GT). Mg(2+) contacts are provided by lysine 157, aspartate 159, and glutamate 160. Position 157 is an N6-carboxylysine (lysine 157).

Belongs to the RuBisCO large chain family. Type IV subfamily. Homodimer. Mg(2+) is required as a cofactor.

The catalysed reaction is 5-methylsulfanyl-2,3-dioxopentyl phosphate = 2-hydroxy-5-methylsulfanyl-3-oxopent-1-enyl phosphate. The protein operates within amino-acid biosynthesis; L-methionine biosynthesis via salvage pathway; L-methionine from S-methyl-5-thio-alpha-D-ribose 1-phosphate: step 3/6. Functionally, catalyzes the enolization of 2,3-diketo-5-methylthiopentyl-1-phosphate (DK-MTP-1-P) into 2-hydroxy-3-keto-5-methylthiopentenyl-1-phosphate (HK-MTPenyl-1-P). The protein is 2,3-diketo-5-methylthiopentyl-1-phosphate enolase of Microcystis aeruginosa (strain NIES-843 / IAM M-2473).